A 133-amino-acid polypeptide reads, in one-letter code: Small ribosomal subunit protein uS8 (133 aa).

Belongs to the universal ribosomal protein uS8 family. In terms of assembly, part of the 30S ribosomal subunit. Contacts proteins S5 and S12.

Functionally, one of the primary rRNA binding proteins, it binds directly to 16S rRNA central domain where it helps coordinate assembly of the platform of the 30S subunit. In Prochlorococcus marinus subsp. pastoris (strain CCMP1986 / NIES-2087 / MED4), this protein is Small ribosomal subunit protein uS8.